A 421-amino-acid polypeptide reads, in one-letter code: Serine--tRNA ligase (421 aa).

Position 229 to 231 (229 to 231 (TSE)) interacts with L-serine. 260–262 (RRE) provides a ligand contact to ATP. Position 283 (E283) interacts with L-serine. Residue 347–350 (EISS) coordinates ATP. S381 contacts L-serine.

The protein belongs to the class-II aminoacyl-tRNA synthetase family. Type-1 seryl-tRNA synthetase subfamily. As to quaternary structure, homodimer. The tRNA molecule binds across the dimer.

The protein localises to the cytoplasm. The enzyme catalyses tRNA(Ser) + L-serine + ATP = L-seryl-tRNA(Ser) + AMP + diphosphate + H(+). The catalysed reaction is tRNA(Sec) + L-serine + ATP = L-seryl-tRNA(Sec) + AMP + diphosphate + H(+). Its pathway is aminoacyl-tRNA biosynthesis; selenocysteinyl-tRNA(Sec) biosynthesis; L-seryl-tRNA(Sec) from L-serine and tRNA(Sec): step 1/1. Catalyzes the attachment of serine to tRNA(Ser). Is also able to aminoacylate tRNA(Sec) with serine, to form the misacylated tRNA L-seryl-tRNA(Sec), which will be further converted into selenocysteinyl-tRNA(Sec). This Fusobacterium nucleatum subsp. nucleatum (strain ATCC 25586 / DSM 15643 / BCRC 10681 / CIP 101130 / JCM 8532 / KCTC 2640 / LMG 13131 / VPI 4355) protein is Serine--tRNA ligase.